A 360-amino-acid polypeptide reads, in one-letter code: Histidinol-phosphate aminotransferase (360 aa).

N6-(pyridoxal phosphate)lysine is present on Lys-221.

It belongs to the class-II pyridoxal-phosphate-dependent aminotransferase family. Histidinol-phosphate aminotransferase subfamily. Homodimer. Pyridoxal 5'-phosphate is required as a cofactor.

The enzyme catalyses L-histidinol phosphate + 2-oxoglutarate = 3-(imidazol-4-yl)-2-oxopropyl phosphate + L-glutamate. The protein operates within amino-acid biosynthesis; L-histidine biosynthesis; L-histidine from 5-phospho-alpha-D-ribose 1-diphosphate: step 7/9. The chain is Histidinol-phosphate aminotransferase from Desulfitobacterium hafniense (strain Y51).